The following is a 330-amino-acid chain: Glycerol-3-phosphate dehydrogenase [NAD(P)+] (330 aa).

NADPH contacts are provided by serine 14, phenylalanine 15, arginine 35, and lysine 109. 2 residues coordinate sn-glycerol 3-phosphate: lysine 109 and glycine 137. Residue alanine 141 coordinates NADPH. Residues lysine 192, aspartate 248, serine 258, arginine 259, and asparagine 260 each coordinate sn-glycerol 3-phosphate. Catalysis depends on lysine 192, which acts as the Proton acceptor. Arginine 259 serves as a coordination point for NADPH. NADPH contacts are provided by leucine 283 and glutamate 285.

The protein belongs to the NAD-dependent glycerol-3-phosphate dehydrogenase family.

The protein resides in the cytoplasm. The enzyme catalyses sn-glycerol 3-phosphate + NAD(+) = dihydroxyacetone phosphate + NADH + H(+). It carries out the reaction sn-glycerol 3-phosphate + NADP(+) = dihydroxyacetone phosphate + NADPH + H(+). It functions in the pathway membrane lipid metabolism; glycerophospholipid metabolism. Functionally, catalyzes the reduction of the glycolytic intermediate dihydroxyacetone phosphate (DHAP) to sn-glycerol 3-phosphate (G3P), the key precursor for phospholipid synthesis. This chain is Glycerol-3-phosphate dehydrogenase [NAD(P)+], found in Rickettsia massiliae (strain Mtu5).